Reading from the N-terminus, the 247-residue chain is Geranylgeranylglyceryl phosphate synthase (247 aa).

Residues Asp-24 and Ser-53 each contribute to the Mg(2+) site. Residues 172-178, 203-204, and 225-226 contribute to the sn-glycerol 1-phosphate site; these read YLEAGSG, GG, and GT.

Belongs to the GGGP/HepGP synthase family. Group II subfamily. The cofactor is Mg(2+).

It is found in the cytoplasm. The catalysed reaction is sn-glycerol 1-phosphate + (2E,6E,10E)-geranylgeranyl diphosphate = sn-3-O-(geranylgeranyl)glycerol 1-phosphate + diphosphate. It functions in the pathway membrane lipid metabolism; glycerophospholipid metabolism. In terms of biological role, prenyltransferase that catalyzes the transfer of the geranylgeranyl moiety of geranylgeranyl diphosphate (GGPP) to the C3 hydroxyl of sn-glycerol-1-phosphate (G1P). This reaction is the first ether-bond-formation step in the biosynthesis of archaeal membrane lipids. This is Geranylgeranylglyceryl phosphate synthase from Cenarchaeum symbiosum (strain A).